Here is a 269-residue protein sequence, read N- to C-terminus: Formamidopyrimidine-DNA glycosylase (269 aa).

Pro-2 (schiff-base intermediate with DNA) is an active-site residue. Catalysis depends on Glu-3, which acts as the Proton donor. Lys-57 acts as the Proton donor; for beta-elimination activity in catalysis. The DNA site is built by His-90, Arg-109, and Lys-150. An FPG-type zinc finger spans residues 235-269 (QVYGRKGEPCRVCGTPIAATKHAQRATFYCRHCQK). Arg-259 serves as the catalytic Proton donor; for delta-elimination activity.

It belongs to the FPG family. As to quaternary structure, monomer. It depends on Zn(2+) as a cofactor.

The catalysed reaction is Hydrolysis of DNA containing ring-opened 7-methylguanine residues, releasing 2,6-diamino-4-hydroxy-5-(N-methyl)formamidopyrimidine.. The enzyme catalyses 2'-deoxyribonucleotide-(2'-deoxyribose 5'-phosphate)-2'-deoxyribonucleotide-DNA = a 3'-end 2'-deoxyribonucleotide-(2,3-dehydro-2,3-deoxyribose 5'-phosphate)-DNA + a 5'-end 5'-phospho-2'-deoxyribonucleoside-DNA + H(+). Functionally, involved in base excision repair of DNA damaged by oxidation or by mutagenic agents. Acts as a DNA glycosylase that recognizes and removes damaged bases. Has a preference for oxidized purines, such as 7,8-dihydro-8-oxoguanine (8-oxoG). Has AP (apurinic/apyrimidinic) lyase activity and introduces nicks in the DNA strand. Cleaves the DNA backbone by beta-delta elimination to generate a single-strand break at the site of the removed base with both 3'- and 5'-phosphates. The sequence is that of Formamidopyrimidine-DNA glycosylase from Salmonella paratyphi B (strain ATCC BAA-1250 / SPB7).